A 79-amino-acid chain; its full sequence is Large ribosomal subunit protein bL31 (79 aa).

Residues C16, C18, C37, and C40 each contribute to the Zn(2+) site.

Belongs to the bacterial ribosomal protein bL31 family. Type A subfamily. As to quaternary structure, part of the 50S ribosomal subunit. Requires Zn(2+) as cofactor.

In terms of biological role, binds the 23S rRNA. The chain is Large ribosomal subunit protein bL31 from Coxiella burnetii (strain CbuG_Q212) (Coxiella burnetii (strain Q212)).